The following is a 255-amino-acid chain: Anamorsin homolog (255 aa).

The segment at 1-163 (MPKETLVVSK…VRPNWKSKTD (163 aa)) is N-terminal SAM-like domain. A linker region spans residues 164 to 185 (KKSPSMIDAAPIDGYISKAPDY). 4 residues coordinate [2Fe-2S] cluster: Cys-188, Cys-195, Cys-198, and Cys-200. The segment at 188 to 200 (CSTKPRACANCTC) is fe-S binding site A. [4Fe-4S] cluster contacts are provided by Cys-224, Cys-227, Cys-235, and Cys-238. 2 consecutive short sequence motifs (cx2C motif) follow at residues 224-227 (CGNC) and 235-238 (CESC). Positions 224–238 (CGNCYLGDAFRCESC) are fe-S binding site B.

This sequence belongs to the anamorsin family. As to quaternary structure, monomer. Requires [2Fe-2S] cluster as cofactor. It depends on [4Fe-4S] cluster as a cofactor.

The protein resides in the cytoplasm. It is found in the mitochondrion intermembrane space. Its function is as follows. Component of the cytosolic iron-sulfur (Fe-S) protein assembly (CIA) machinery. Required for the maturation of extramitochondrial Fe-S proteins. Part of an electron transfer chain functioning in an early step of cytosolic Fe-S biogenesis, facilitating the de novo assembly of a [4Fe-4S] cluster on the cytosolic Fe-S scaffold complex. Electrons are transferred from NADPH via a FAD- and FMN-containing diflavin oxidoreductase. Together with the diflavin oxidoreductase, also required for the assembly of the diferric tyrosyl radical cofactor of ribonucleotide reductase (RNR), probably by providing electrons for reduction during radical cofactor maturation in the catalytic small subunit. The polypeptide is Anamorsin homolog (Theileria annulata).